The chain runs to 604 residues: Glutamine--fructose-6-phosphate aminotransferase [isomerizing] (604 aa).

Cysteine 2 functions as the Nucleophile; for GATase activity in the catalytic mechanism. The region spanning 2–218 (CGIVGVVGNR…DKELVILTKD (217 aa)) is the Glutamine amidotransferase type-2 domain. SIS domains follow at residues 284–423 (IITS…ANGK) and 452–594 (VAEK…VDKP). Catalysis depends on lysine 599, which acts as the For Fru-6P isomerization activity.

Homodimer.

The protein localises to the cytoplasm. It catalyses the reaction D-fructose 6-phosphate + L-glutamine = D-glucosamine 6-phosphate + L-glutamate. Catalyzes the first step in hexosamine metabolism, converting fructose-6P into glucosamine-6P using glutamine as a nitrogen source. The protein is Glutamine--fructose-6-phosphate aminotransferase [isomerizing] of Streptococcus pyogenes serotype M3 (strain ATCC BAA-595 / MGAS315).